We begin with the raw amino-acid sequence, 870 residues long: Linoleate 9S-lipoxygenase 2 (870 aa).

The region spanning 32–158 (NDFGATVIDG…KYRYNRVFFS (127 aa)) is the PLAT domain. A Lipoxygenase domain is found at 161–870 (TSLPSKMPAA…ARGIPNSISI (710 aa)). Residues 203–243 (YNDLGEPDSGNPRPVLGGSPDRPYPRRGRTGRKPTKTDPTA) form a disordered region. Positions 227-236 (PRRGRTGRKP) are enriched in basic residues. Residues His525, His530, His716, Asn720, and Ile870 each contribute to the Fe cation site.

The protein belongs to the lipoxygenase family. In terms of assembly, monomer. Fe cation is required as a cofactor.

It localises to the cytoplasm. It catalyses the reaction (9Z,12Z)-octadecadienoate + O2 = (9S)-hydroperoxy-(10E,12Z)-octadecadienoate. It functions in the pathway lipid metabolism; oxylipin biosynthesis. Functionally, plant lipoxygenase may be involved in a number of diverse aspects of plant physiology including growth and development, pest resistance, and senescence or responses to wounding. Catalyzes the hydroperoxidation of lipids containing a cis,cis-1,4-pentadiene structure. In Oryza sativa subsp. japonica (Rice), this protein is Linoleate 9S-lipoxygenase 2 (LOX1.1).